We begin with the raw amino-acid sequence, 470 residues long: MSTNEGSLWGGRFADGPADALAALSKSTHFDWVLAPYDVVASKAHARVLFRAGLLTEEQRDGLLAGLDSLGSDVADGSFGPLVSDEDVHGALERGLIDRVGPELGGRLRAGRSRNDQVATLFRLWLRDAVRRVADGVLEVVGALTTQAAAHPTAIMPGKTHLQSAQPVLLAHHLLAHAHPLLRDVDRLADFDKRAAVSPYGSGALAGSSLGLDPDAIAEELGFAAAADNSIDATASRDFAAEAAFVFSMIGVDLSRLAEDVILWSTTEFGYVELHDAWSTGSSIMPQKKNPDIAELARGKSGRLIGNLTGLLATLKAQPLAYNRDLQEDKEPVFDSVAQLELLLPAMAGLVATLRFDVDRMAELAPLGYTLATDVAEWLVRRGVPFRVAHEAAGAAVRAAEARGVGLEELEDAELAGIHPELTAEVRDVLSTEGSVNSRDARGGTAPIQVARQLGAVRDTADELRRRLRR.

It belongs to the lyase 1 family. Argininosuccinate lyase subfamily.

It localises to the cytoplasm. The catalysed reaction is 2-(N(omega)-L-arginino)succinate = fumarate + L-arginine. It participates in amino-acid biosynthesis; L-arginine biosynthesis; L-arginine from L-ornithine and carbamoyl phosphate: step 3/3. This Mycolicibacterium gilvum (strain PYR-GCK) (Mycobacterium gilvum (strain PYR-GCK)) protein is Argininosuccinate lyase.